The sequence spans 263 residues: Glucosamine-6-phosphate deaminase (263 aa).

Aspartate 72 serves as the catalytic Proton acceptor; for enolization step. Catalysis depends on aspartate 141, which acts as the For ring-opening step. The active-site Proton acceptor; for ring-opening step is the histidine 143. The active-site For ring-opening step is the glutamate 148.

This sequence belongs to the glucosamine/galactosamine-6-phosphate isomerase family. NagB subfamily.

The enzyme catalyses alpha-D-glucosamine 6-phosphate + H2O = beta-D-fructose 6-phosphate + NH4(+). Its pathway is amino-sugar metabolism; N-acetylneuraminate degradation; D-fructose 6-phosphate from N-acetylneuraminate: step 5/5. With respect to regulation, allosterically activated by N-acetylglucosamine 6-phosphate (GlcNAc6P). Its function is as follows. Catalyzes the reversible isomerization-deamination of glucosamine 6-phosphate (GlcN6P) to form fructose 6-phosphate (Fru6P) and ammonium ion. This chain is Glucosamine-6-phosphate deaminase, found in Phocaeicola vulgatus (strain ATCC 8482 / DSM 1447 / JCM 5826 / CCUG 4940 / NBRC 14291 / NCTC 11154) (Bacteroides vulgatus).